Here is a 359-residue protein sequence, read N- to C-terminus: 4-galactosyl-N-acetylglucosaminide 3-alpha-L-fucosyltransferase 9 (359 aa).

Residues 1-11 (MTSTSKGILRP) are Cytoplasmic-facing. Residues 12–32 (FLIVCIILGCFMACLLIYIKP) form a helical; Signal-anchor for type II membrane protein membrane-spanning segment. The Lumenal segment spans residues 33-359 (TNSWVFSPME…VGNLEKWFWN (327 aa)). Asn62 carries an N-linked (GlcNAc...) asparagine glycan. An acceptor-binding region spans residues 63 to 168 (ETTILVWVWP…RRDSDIQVPY (106 aa)). Gln75 contacts a beta-D-galactosyl-(1-&gt;4)-N-acetyl-beta-D-glucosaminyl derivative. Cystine bridges form between Cys82–Cys335, Cys91–Cys338, and Cys190–Cys238. Asn101 carries an N-linked (GlcNAc...) asparagine glycan. Glu137 contacts a beta-D-galactosyl-(1-&gt;4)-N-acetyl-beta-D-glucosaminyl derivative. Glu137 serves as the catalytic Nucleophile. Position 137 (Glu137) interacts with GDP-beta-L-fucose. Asn153 carries N-linked (GlcNAc...) asparagine glycosylation. Tyr168, Val192, Ser194, Asn195, Arg202, Val226, Tyr241, Asn246, Tyr252, Glu255, and Lys256 together coordinate GDP-beta-L-fucose. Residues 169-326 (GFLTVSTNPF…NWRKDFTVNL (158 aa)) form a donor-binding region. Residues 327–359 (PRFWESHACLACDHVKRHQEYKSVGNLEKWFWN) are acceptor-binding.

This sequence belongs to the glycosyltransferase 10 family. In terms of assembly, homodimer. Post-translationally, N-glycosylated with complex-type N-glycans. Mainly detected in brain and kidney.

It localises to the golgi apparatus. The protein localises to the trans-Golgi network membrane. Its subcellular location is the golgi apparatus membrane. The catalysed reaction is a beta-D-galactosyl-(1-&gt;4)-N-acetyl-beta-D-glucosaminyl derivative + GDP-beta-L-fucose = a beta-D-galactosyl-(1-&gt;4)-[alpha-L-fucosyl-(1-&gt;3)]-N-acetyl-beta-D-glucosaminyl derivative + GDP + H(+). It catalyses the reaction an alpha-Neu5Ac-(2-&gt;3)-beta-D-Gal-(1-&gt;4)-beta-D-GlcNAc-(1-&gt;3)-beta-D-Gal-(1-&gt;4)-beta-D-GlcNAc derivative + GDP-beta-L-fucose = an alpha-Neu5Ac-(2-&gt;3)-beta-D-Gal-(1-&gt;4)-beta-D-GlcNAc-(1-&gt;3)-beta-D-Gal-(1-&gt;4)-[alpha-L-Fuc-(1-&gt;3)]-beta-D-GlcNAc derivative + GDP + H(+). The enzyme catalyses alpha-N-glycoloylneuraminosyl-(2-&gt;3)-beta-D-galactosyl-(1-&gt;4)-N-acetyl-beta-D-glucosaminyl-(1-&gt;3)-beta-D-galactosyl-(1-&gt;4)-N-acetyl-beta-D-glucosaminyl-(1-&gt;3)-beta-D-galactosyl-(1-&gt;4)-beta-D-glucosyl-(1&lt;-&gt;1')-ceramide + GDP-beta-L-fucose = alpha-N-glycoloylneuraminosyl-(2-&gt;3)-beta-D-galactosyl-(1-&gt;4)-N-acetyl-beta-D-glucosaminyl-(1-&gt;3)-beta-D-galactosyl-(1-&gt;4)-[alpha-L-fucosyl-(1-&gt;3)]-N-acetyl-beta-D-glucosaminyl-(1-&gt;3)-beta-D-galactosyl-(1-&gt;4)-beta-D-glucosyl-(1&lt;-&gt;1')-ceramide + GDP + H(+). It carries out the reaction alpha-D-galactosyl-(1-&gt;3)-beta-D-galactosyl-(1-&gt;4)-N-acetyl-beta-D-glucosaminyl-(1-&gt;3)-beta-D-galactosyl-(1-&gt;4)-beta-D-glucosyl-(1&lt;-&gt;1')-ceramide + GDP-beta-L-fucose = a neolactoside IV(3)-alpha-Gal,III(3)-alpha-Fuc-nLc4Cer + GDP + H(+). The catalysed reaction is a neolactoside nLc4Cer + GDP-beta-L-fucose = a neolactoside III(3)-alpha-Fuc-nLc4Cer + GDP + H(+). It catalyses the reaction an N-acetyl-alpha-neuraminyl-(2-&gt;3)-beta-D-galactosyl-(1-&gt;4)-N-acetyl-beta-D-glucosaminyl derivative + GDP-beta-L-fucose = an alpha-Neu5Ac-(2-&gt;3)-beta-D-Gal-(1-&gt;4)-[alpha-L-Fuc-(1-&gt;3)]-beta-D-GlcNAc derivative + GDP + H(+). The enzyme catalyses beta-D-Gal-(1-&gt;4)-beta-D-GlcNAc-(1-&gt;3)-beta-D-Gal-(1-&gt;4)-D-Glc + GDP-beta-L-fucose = beta-D-Gal-(1-&gt;4)-[alpha-L-Fuc-(1-&gt;3)]-beta-D-GlcNAc-(1-&gt;3)-beta-D-Gal-(1-&gt;4)-D-Glc + GDP + H(+). It carries out the reaction an alpha-L-Fuc-(1-&gt;2)-beta-D-Gal-(1-&gt;4)-beta-D-GlcNAc derivative + GDP-beta-L-fucose = an alpha-L-Fuc-(1-&gt;2)-beta-D-Gal-(1-&gt;4)-[alpha-L-Fuc-(1-&gt;3)]-beta-D-GlcNAc derivative + GDP + H(+). Its pathway is protein modification; protein glycosylation. The protein operates within glycolipid biosynthesis. Its activity is regulated as follows. Activated by Mn2+. Functionally, catalyzes alpha(1-&gt;3) linkage of fucosyl moiety transferred from GDP-beta-L-fucose to N-acetyl glucosamine (GlcNAc) within type 2 lactosamine (LacNAc, beta-D-Gal-(1-&gt;4)-beta-D-GlcNAc-) glycan attached to glycolipids and N- or O-linked glycoproteins. Fucosylates distal type 2 LacNAc and its fucosylated (H-type 2 LacNAc) and sialylated (sialyl-type 2 LacNAc) derivatives to form Lewis x (Lex) (CD15) and Lewis y (Ley) antigenic epitopes involved in cell adhesion and differentiation. Generates Lex epitopes in the brain, presumably playing a role in the maintenance of neuronal stemness and neurite outgrowth in progenitor neural cells. Fucosylates the internal type 2 LacNAc unit of the polylactosamine chain to form VIM-2 antigen that serves as recognition epitope for SELE. Can also modify milk oligosaccharides in particular type 2 tetrasaccharide LNnT. In Mus musculus (Mouse), this protein is 4-galactosyl-N-acetylglucosaminide 3-alpha-L-fucosyltransferase 9.